Consider the following 506-residue polypeptide: Histone deacetylase complex subunit CTI6 (506 aa).

Residues 49-71 are disordered; that stretch reads EESVKQEDVPMEGGEGEVEEEEG. Positions 62-71 are enriched in acidic residues; the sequence is GEGEVEEEEG. The PHD-type zinc-finger motif lies at 72–123; sequence ETRCICGELDTPDDSGFFIQCEQCSSWQHGYCVSITQDNAPDKYWCEQCRPE. Positions 138–425 are disordered; it reads IYKPVQEKRR…KPRLPPQRTS (288 aa). T174 carries the post-translational modification Phosphothreonine. S175 bears the Phosphoserine mark. At T177 the chain carries Phosphothreonine. Residues 179–195 show a composition bias toward acidic residues; sequence DNVDDIGDEEDEVEDEA. A phosphoserine mark is found at S216 and S267. 2 stretches are compositionally biased toward basic and acidic residues: residues 231–271 and 312–342; these read DSDK…HQED and DDMKESLRPSKEQSMEKTNDVEKEASQEKES. Basic residues predominate over residues 373–393; it reads ASSRGSKRVSKPARKGNRTRR. Residues 394 to 404 are compositionally biased toward polar residues; it reads SNTSSDTNQNR. Residues 405 to 415 show a composition bias toward basic and acidic residues; sequence RSADIGTDKPV.

In terms of assembly, component of the RPD3C(L) complex composed of at least ASH1, CTI6, DEP1, PHO23, RPD3, RXT2, RXT3, SAP30, SDS3, SIN3, UME1 and UME6. Interacts with CYC8.

It is found in the nucleus. Component of the RPD3C(L) histone deacetylase complex (HDAC). Responsible for the deacetylation of lysine residues on the N-terminal part of the core histones (H2A, H2B, H3 and H4). Histone deacetylation gives a tag for epigenetic repression and plays an important role in transcriptional regulation, cell cycle progression and developmental events. CTI6 links the SAGA coactivator to the CYC8-TUP1 corepressor. Involved in transcription regulation of heme-regulated genes and required for GCN5 recruitment, histone H3 acetylation and SPT15/TBP binding to promoters. The sequence is that of Histone deacetylase complex subunit CTI6 (CTI6) from Saccharomyces cerevisiae (strain ATCC 204508 / S288c) (Baker's yeast).